The following is a 334-amino-acid chain: Cathepsin R (334 aa).

The N-terminal stretch at 1–17 is a signal peptide; the sequence is MAAVVFIAFLYLGVASG. The propeptide at 18–114 is activation peptide; sequence VPVLDSSLDA…SIMKREAGSI (97 aa). 2 disulfides stabilise this stretch: Cys136/Cys179 and Cys170/Cys212. Cys139 is an active-site residue. An N-linked (GlcNAc...) asparagine glycan is attached at Asn269. An intrachain disulfide couples Cys270 to Cys323. Residues His277 and Asn301 contribute to the active site.

This sequence belongs to the peptidase C1 family. In terms of tissue distribution, placenta.

Its subcellular location is the lysosome. This is Cathepsin R (Ctsr) from Mus musculus (Mouse).